Reading from the N-terminus, the 315-residue chain is MKSGLKIVFAGTPEFAANHLSALIESEHQVIAAYTQPDRPAGRGKKLHASAVKQLAQQHDIPVYQPASLKSEEAQQQLAALNADVMVVVAYGLILPQIILDTPKYGCLNVHGSLLPKWRGAAPIQRAIWAGDAETGVTIMQMDKGLDTGAVLSELRLAITPIDTSATLYTKLAELGPKGLLETLASLGDLTPQAQDNTLATYAEKLSKQEAKIDWTMTAAQLERNVRAFDPWPVAYFEANGAAIKVRSAEVQQTPICDNAKPGQIIQADKHAIGVQTGDGVLLIKTLQLPGKKPLATQDILNGHSDWFSVGTILS.

113 to 116 contributes to the (6S)-5,6,7,8-tetrahydrofolate binding site; sequence SLLP.

The protein belongs to the Fmt family.

It catalyses the reaction L-methionyl-tRNA(fMet) + (6R)-10-formyltetrahydrofolate = N-formyl-L-methionyl-tRNA(fMet) + (6S)-5,6,7,8-tetrahydrofolate + H(+). In terms of biological role, attaches a formyl group to the free amino group of methionyl-tRNA(fMet). The formyl group appears to play a dual role in the initiator identity of N-formylmethionyl-tRNA by promoting its recognition by IF2 and preventing the misappropriation of this tRNA by the elongation apparatus. In Pseudoalteromonas atlantica (strain T6c / ATCC BAA-1087), this protein is Methionyl-tRNA formyltransferase.